Here is a 245-residue protein sequence, read N- to C-terminus: Eukaryotic translation initiation factor 6 (245 aa).

This sequence belongs to the eIF-6 family. Monomer. Associates with the 60S ribosomal subunit.

It is found in the cytoplasm. The protein localises to the nucleus. Its subcellular location is the nucleolus. Binds to the 60S ribosomal subunit and prevents its association with the 40S ribosomal subunit to form the 80S initiation complex in the cytoplasm. May also be involved in ribosome biogenesis. The polypeptide is Eukaryotic translation initiation factor 6 (Drosophila melanogaster (Fruit fly)).